Here is a 772-residue protein sequence, read N- to C-terminus: Carnitine O-palmitoyltransferase 1, muscle isoform (772 aa).

Residues 1–47 lie on the Cytoplasmic side of the membrane; that stretch reads MAEAHQAVAFQFTVTPDGVDFRLSREALKHVYLSGINSWKKRLIRIK. Residues 48-73 form a helical membrane-spanning segment; the sequence is NGILRGVYPGSPTSWLVVIMATVGSS. Topologically, residues 74–102 are mitochondrial intermembrane; it reads FCNVDISLGLVSCIQRCLPQGCGPYQTPQ. The chain crosses the membrane as a helical span at residues 103 to 122; sequence TRALLSMAIFSTGVWVTGIF. Residues 123-772 are Cytoplasmic-facing; sequence FFRQTLKLLL…DLFQVPKAYS (650 aa). H473 (proton acceptor) is an active-site residue. Residue 555-567 coordinates CoA; sequence GKGLIKKCRTSPD. (R)-carnitine contacts are provided by Y589 and T602.

The protein belongs to the carnitine/choline acetyltransferase family. In terms of tissue distribution, strong expression in heart and skeletal muscle. No expression in liver and kidney.

It is found in the mitochondrion outer membrane. It catalyses the reaction (R)-carnitine + hexadecanoyl-CoA = O-hexadecanoyl-(R)-carnitine + CoA. It participates in lipid metabolism; fatty acid beta-oxidation. Its function is as follows. Catalyzes the transfer of the acyl group of long-chain fatty acid-CoA conjugates onto carnitine, an essential step for the mitochondrial uptake of long-chain fatty acids and their subsequent beta-oxidation in the mitochondrion. The polypeptide is Carnitine O-palmitoyltransferase 1, muscle isoform (CPT1B) (Homo sapiens (Human)).